The chain runs to 152 residues: Endoribonuclease YbeY (152 aa).

Zn(2+)-binding residues include His-114, His-118, and His-124.

This sequence belongs to the endoribonuclease YbeY family. It depends on Zn(2+) as a cofactor.

Its subcellular location is the cytoplasm. Single strand-specific metallo-endoribonuclease involved in late-stage 70S ribosome quality control and in maturation of the 3' terminus of the 16S rRNA. The chain is Endoribonuclease YbeY from Coxiella burnetii (strain CbuK_Q154) (Coxiella burnetii (strain Q154)).